A 488-amino-acid chain; its full sequence is Facilitated trehalose transporter Tret1-2 homolog (488 aa).

The Cytoplasmic segment spans residues 1–28 (MKILMRADTHVSYSVPAEGPKANFTFSQ). Residues 29-49 (VLAALSVSLCSLVVGFVSAYT) traverse the membrane as a helical segment. The Extracellular portion of the chain corresponds to 50 to 72 (SPALVSMTDRTITSFEVTKDAGS). Residues 73-93 (WVGGIMPLAALAGGITGGPLI) traverse the membrane as a helical segment. The Cytoplasmic portion of the chain corresponds to 94–105 (EYLGRRTTILAT). The helical transmembrane segment at 106–126 (AVPFIVSSLLIACAVNVIMIL) threads the bilayer. Residues 127 to 129 (CGR) lie on the Extracellular side of the membrane. A helical transmembrane segment spans residues 130–150 (FLTGFCVGIASLSLPVYLGET). The Cytoplasmic portion of the chain corresponds to 151–160 (LQPEVRGTLG). A helical transmembrane segment spans residues 161–181 (LLPTALGNIGILVCYVAGSFM). The N-linked (GlcNAc...) asparagine glycan is linked to Asn182. The Extracellular portion of the chain corresponds to 182 to 184 (NWS). Residues 185–205 (MLAFLGAALPVPFLILMIIIP) traverse the membrane as a helical segment. Topologically, residues 206–268 (ETPRWFVNRG…ELFKRINLKP (63 aa)) are cytoplasmic. Residues 269-289 (LSISLGLMFFQQFSGINAVIF) traverse the membrane as a helical segment. The Extracellular segment spans residues 290-305 (YTVQIFKDAGSTIDSN). The helical transmembrane segment at 306–326 (LCTIIVGIVNFFATFMGILLI) threads the bilayer. Topologically, residues 327–332 (DRLGRK) are cytoplasmic. A helical transmembrane segment spans residues 333 to 353 (ILLYISDIAMILTLSILGGFF). Residues 354-372 (YCKAHGPDVSHLGWLPLTC) lie on the Extracellular side of the membrane. Residues 373-393 (FVIYILGFSLGFGPIPWLMMG) form a helical membrane-spanning segment. Topologically, residues 394 to 402 (EILPAKIRG) are cytoplasmic. A helical transmembrane segment spans residues 403 to 423 (PAASVVTAFNWFCTFVVTKTF). The Extracellular segment spans residues 424–433 (QDLTVAMGAH). The chain crosses the membrane as a helical span at residues 434–454 (GAFWLFGVVCIVGLFFVIICV). Topologically, residues 455-488 (PETRGKSLEEIERKMMGRVPISAVVNIKPFSFNM) are cytoplasmic.

Belongs to the major facilitator superfamily. Sugar transporter (TC 2.A.1.1) family. Trehalose transporter subfamily.

The protein localises to the cell membrane. Its function is as follows. Fails to transport trehalose. The polypeptide is Facilitated trehalose transporter Tret1-2 homolog (Drosophila simulans (Fruit fly)).